We begin with the raw amino-acid sequence, 758 residues long: DNA ligase (758 aa).

A disordered region spans residues 1 to 28 (MPENFGAMRQDGLVSTSESDSPAPAATP). NAD(+)-binding positions include 60–64 (DAEFD), 109–110 (SL), and E148. Residue K150 is the N6-AMP-lysine intermediate of the active site. Residues R171, E208, K324, and K348 each contribute to the NAD(+) site. Zn(2+)-binding residues include C442, C445, C461, and C467. The region spanning 660 to 749 (SVRRTLAGLT…PDHSAEAEEN (90 aa)) is the BRCT domain. A disordered region spans residues 735–758 (LLAHGPDHSAEAEENESEGSTTND).

The protein belongs to the NAD-dependent DNA ligase family. LigA subfamily. Mg(2+) serves as cofactor. Requires Mn(2+) as cofactor.

The enzyme catalyses NAD(+) + (deoxyribonucleotide)n-3'-hydroxyl + 5'-phospho-(deoxyribonucleotide)m = (deoxyribonucleotide)n+m + AMP + beta-nicotinamide D-nucleotide.. In terms of biological role, DNA ligase that catalyzes the formation of phosphodiester linkages between 5'-phosphoryl and 3'-hydroxyl groups in double-stranded DNA using NAD as a coenzyme and as the energy source for the reaction. It is essential for DNA replication and repair of damaged DNA. This is DNA ligase from Renibacterium salmoninarum (strain ATCC 33209 / DSM 20767 / JCM 11484 / NBRC 15589 / NCIMB 2235).